The sequence spans 72 residues: Phosphonoacetate hydrolase (72 aa).

In terms of assembly, monomer. Requires Unlike bacterial phosphonoacetate hydrolase, does not require zinc as a cofactor. as cofactor.

The enzyme catalyses phosphonoacetate + H2O = acetate + phosphate + H(+). With respect to regulation, unaffected by EDTA or Ca(2+), Co(2+), Cu(2+), Mg(2+), Mn(2+), Ni(2+) and Zn(2+). This Penicillium oxalicum protein is Phosphonoacetate hydrolase.